A 256-amino-acid polypeptide reads, in one-letter code: Phosphatidylglycerol--prolipoprotein diacylglyceryl transferase (256 aa).

A run of 3 helical transmembrane segments spans residues 19–39, 56–76, and 91–111; these read VHWY…LGYW, LIFY…MLFY, and IWEG…AAWL. An a 1,2-diacyl-sn-glycero-3-phospho-(1'-sn-glycerol)-binding site is contributed by arginine 139. A helical membrane pass occupies residues 231 to 251; the sequence is FGWLTMGQVLSIPMLLIGIWL.

The protein belongs to the Lgt family.

It is found in the cell inner membrane. It catalyses the reaction L-cysteinyl-[prolipoprotein] + a 1,2-diacyl-sn-glycero-3-phospho-(1'-sn-glycerol) = an S-1,2-diacyl-sn-glyceryl-L-cysteinyl-[prolipoprotein] + sn-glycerol 1-phosphate + H(+). It participates in protein modification; lipoprotein biosynthesis (diacylglyceryl transfer). Its function is as follows. Catalyzes the transfer of the diacylglyceryl group from phosphatidylglycerol to the sulfhydryl group of the N-terminal cysteine of a prolipoprotein, the first step in the formation of mature lipoproteins. The polypeptide is Phosphatidylglycerol--prolipoprotein diacylglyceryl transferase (Legionella pneumophila (strain Lens)).